We begin with the raw amino-acid sequence, 163 residues long: Neurotrophin-3 (163 aa).

Positions 1–3 are cleaved as a signal peptide; it reads IQS. A propeptide spanning residues 4 to 119 is cleaved from the precursor; the sequence is TSMDQGILTE…VLNRTSRRKR (116 aa). A disordered region spans residues 35-61; it reads KQTARTKDGTQTTVKKSEAEADATASQ. An N-linked (GlcNAc...) asparagine glycan is attached at Asn-112.

Belongs to the NGF-beta family.

The protein resides in the secreted. Its function is as follows. Seems to promote the survival of visceral and proprioceptive sensory neurons. In Corallus caninus (Emerald tree boa), this protein is Neurotrophin-3 (NTF3).